We begin with the raw amino-acid sequence, 92 residues long: Small ribosomal subunit protein bS20 (92 aa).

Positions 1 to 24 are disordered; sequence MANTTSAKKATRKIARRTDVNKAR.

Belongs to the bacterial ribosomal protein bS20 family.

Its function is as follows. Binds directly to 16S ribosomal RNA. The sequence is that of Small ribosomal subunit protein bS20 from Rhizobium etli (strain ATCC 51251 / DSM 11541 / JCM 21823 / NBRC 15573 / CFN 42).